The primary structure comprises 82 residues: RNA-binding protein Hfq (82 aa).

The Sm domain occupies 11–71 (DTFLNHVRKT…ISTIMPGAPI (61 aa)).

It belongs to the Hfq family. As to quaternary structure, homohexamer.

RNA chaperone that binds small regulatory RNA (sRNAs) and mRNAs to facilitate mRNA translational regulation in response to envelope stress, environmental stress and changes in metabolite concentrations. Also binds with high specificity to tRNAs. The chain is RNA-binding protein Hfq from Bradyrhizobium sp. (strain BTAi1 / ATCC BAA-1182).